We begin with the raw amino-acid sequence, 1009 residues long: DNA polymerase catalytic subunit (1009 aa).

This sequence belongs to the DNA polymerase type-B family.

It is found in the host nucleus. It catalyses the reaction DNA(n) + a 2'-deoxyribonucleoside 5'-triphosphate = DNA(n+1) + diphosphate. This chain is DNA polymerase catalytic subunit (9), found in Saimiri sciureus (Common squirrel monkey).